A 430-amino-acid polypeptide reads, in one-letter code: Putative cytochrome P450 139 (430 aa).

Residue cysteine 372 participates in heme binding.

The protein belongs to the cytochrome P450 family. Heme is required as a cofactor.

The protein is Putative cytochrome P450 139 (cyp139) of Mycobacterium bovis (strain ATCC BAA-935 / AF2122/97).